A 106-amino-acid polypeptide reads, in one-letter code: Foxo1-corepressor (106 aa).

Residues methionine 1 to aspartate 44 form a disordered region. The short motif at isoleucine 78–leucine 87 is the Nuclear export signal element. Phosphothreonine; by PKA is present on threonine 93.

Interacts with FOXO1 (via N-terminal domain); the interaction is direct, occurs in a forskolin-independent manner that prevents SIRT1 binding to FOXO1. Interacts with FOXO3. Does not interact with FOXO4. Post-translationally, phosphorylated at Thr-93 by PKA, leading to import into the nucleus. In terms of tissue distribution, expressed in adipocytes. Expressed in brown and white adipose tissue but not in liver. Protein levels in brown and white adipose tissues decrease following fasting (at protein level). Expressed in white and brown adipose tissues. Expressed in adipocytes. Not expressed in liver, skeletal muscle and brain.

The protein resides in the cytoplasm. It localises to the cytosol. It is found in the nucleus. Functionally, regulator of adipocytes that acts by repressing FOXO1 transcriptional activity. Acts by promoting acetylation of FOXO1, both by preventing the interaction between FOXO1 and SIRT1 deacetylase, and by mediating acetyltransferase activity in vitro. Regulates insulin sensitivity and energy metabolism. In Mus musculus (Mouse), this protein is Foxo1-corepressor (Fcor).